The following is a 224-amino-acid chain: Casparian strip membrane protein 3 (224 aa).

The interval 1–30 (MESKKEGVASAPTSPESRRTRSNGKGKTIA) is disordered. At 1–57 (MESKKEGVASAPTSPESRRTRSNGKGKTIAEATPPSVTVVSTKVTPSPRGGWRKGAA) the chain is on the cytoplasmic side. The chain crosses the membrane as a helical span at residues 58–78 (ILDFILRLGAISSAIGAAAVM). Over 79-105 (GNNEQILPFFTQFFQFHVQWDDFPMFQ) the chain is Extracellular. A helical membrane pass occupies residues 106 to 126 (FFVFANGAAVVFLILSLPFSI). Over 127–138 (VCIVRPFAVGPR) the chain is Cytoplasmic. Residues 139 to 159 (LLLVIVDIFAMALVIAAASAA) traverse the membrane as a helical segment. Residues 160-191 (AAVVYLAHNGSQDANWIAICQQYTDFCQVTSQ) lie on the Extracellular side of the membrane. Asn168 is a glycosylation site (N-linked (GlcNAc...) asparagine). Residues 192–212 (AVVASFVAAVFLICLIVLSSV) form a helical membrane-spanning segment. Residues 213–224 (ALKKGLKREFGW) are Cytoplasmic-facing.

The protein belongs to the Casparian strip membrane proteins (CASP) family. In terms of assembly, homodimer and heterodimers.

It is found in the cell membrane. In terms of biological role, regulates membrane-cell wall junctions and localized cell wall deposition. Required for establishment of the Casparian strip membrane domain (CSD) and the subsequent formation of Casparian strips, a cell wall modification of the root endodermis that determines an apoplastic barrier between the intraorganismal apoplasm and the extraorganismal apoplasm and prevents lateral diffusion. The sequence is that of Casparian strip membrane protein 3 from Vigna unguiculata (Cowpea).